A 218-amino-acid polypeptide reads, in one-letter code: NADH dehydrogenase [ubiquinone] iron-sulfur protein 7, mitochondrial (218 aa).

Residues 34-48 are compositionally biased toward low complexity; the sequence is LPALSPSTSPTSYTR. Residues 34-61 form a disordered region; that stretch reads LPALSPSTSPTSYTRPGPPSTSPPPPGL. Over residues 49 to 60 the composition is skewed to pro residues; that stretch reads PGPPSTSPPPPG. [4Fe-4S] cluster-binding residues include cysteine 93, cysteine 94, cysteine 158, and cysteine 188.

This sequence belongs to the complex I 20 kDa subunit family. As to quaternary structure, complex I is composed of at least 49 different subunits. This is a component of the iron-sulfur (IP) fragment of the enzyme. Requires [4Fe-4S] cluster as cofactor.

Its subcellular location is the mitochondrion. It catalyses the reaction a ubiquinone + NADH + 5 H(+)(in) = a ubiquinol + NAD(+) + 4 H(+)(out). Functionally, core subunit of the mitochondrial membrane respiratory chain NADH dehydrogenase (Complex I) that is believed to belong to the minimal assembly required for catalysis. Complex I functions in the transfer of electrons from NADH to the respiratory chain. The immediate electron acceptor for the enzyme is believed to be ubiquinone. In Arabidopsis thaliana (Mouse-ear cress), this protein is NADH dehydrogenase [ubiquinone] iron-sulfur protein 7, mitochondrial.